The primary structure comprises 228 residues: Homeobox-leucine zipper protein ATHB-53 (228 aa).

Residues 36-62 (DGGEESKPVKRRRKRRSKGSSATNEED) are disordered. Basic residues predominate over residues 44–53 (VKRRRKRRSK). A DNA-binding region (homeobox) is located at residues 68–127 (GMLRKRKLTDEQVNMLEYSFGNEHKLESGRKEKIAGELGLDPRQVAVWFQNRRARWKNKK). The segment at 128–156 (LEEEYAKLKNHHDNVVLGQCQLESQILKL) is leucine-zipper.

The protein belongs to the HD-ZIP homeobox family. Class I subfamily. As to expression, expressed in root meristem, late flowers and siliques.

Its subcellular location is the nucleus. In terms of biological role, probable transcription factor that may play a regulatory role in auxin/cytokinin signaling during root development. The polypeptide is Homeobox-leucine zipper protein ATHB-53 (ATHB-53) (Arabidopsis thaliana (Mouse-ear cress)).